Consider the following 245-residue polypeptide: tRNA pseudouridine synthase A (245 aa).

The active-site Nucleophile is the Asp-52. Tyr-110 is a substrate binding site.

This sequence belongs to the tRNA pseudouridine synthase TruA family. Homodimer.

The catalysed reaction is uridine(38/39/40) in tRNA = pseudouridine(38/39/40) in tRNA. In terms of biological role, formation of pseudouridine at positions 38, 39 and 40 in the anticodon stem and loop of transfer RNAs. This Borrelia duttonii (strain Ly) protein is tRNA pseudouridine synthase A.